We begin with the raw amino-acid sequence, 509 residues long: Bifunctional purine biosynthesis protein PurH (509 aa).

Residues Met-1 to Val-144 enclose the MGS-like domain.

This sequence belongs to the PurH family.

It catalyses the reaction (6R)-10-formyltetrahydrofolate + 5-amino-1-(5-phospho-beta-D-ribosyl)imidazole-4-carboxamide = 5-formamido-1-(5-phospho-D-ribosyl)imidazole-4-carboxamide + (6S)-5,6,7,8-tetrahydrofolate. The enzyme catalyses IMP + H2O = 5-formamido-1-(5-phospho-D-ribosyl)imidazole-4-carboxamide. Its pathway is purine metabolism; IMP biosynthesis via de novo pathway; 5-formamido-1-(5-phospho-D-ribosyl)imidazole-4-carboxamide from 5-amino-1-(5-phospho-D-ribosyl)imidazole-4-carboxamide (10-formyl THF route): step 1/1. It participates in purine metabolism; IMP biosynthesis via de novo pathway; IMP from 5-formamido-1-(5-phospho-D-ribosyl)imidazole-4-carboxamide: step 1/1. The sequence is that of Bifunctional purine biosynthesis protein PurH from Oenococcus oeni (strain ATCC BAA-331 / PSU-1).